The chain runs to 380 residues: 3-dehydroquinate synthase (380 aa).

Belongs to the archaeal-type DHQ synthase family.

The catalysed reaction is 2-amino-2,3,7-trideoxy-D-lyxo-hept-6-ulosonate + NAD(+) + H2O = 3-dehydroquinate + NH4(+) + NADH + H(+). Functionally, catalyzes the oxidative deamination and cyclization of 2-amino-3,7-dideoxy-D-threo-hept-6-ulosonic acid (ADH) to yield 3-dehydroquinate (DHQ), which is fed into the canonical shikimic pathway of aromatic amino acid biosynthesis. In Methanosarcina mazei (strain ATCC BAA-159 / DSM 3647 / Goe1 / Go1 / JCM 11833 / OCM 88) (Methanosarcina frisia), this protein is 3-dehydroquinate synthase.